The primary structure comprises 213 residues: Histone H1.1 (213 aa).

A disordered region spans residues 1–43; it reads MSETAPVAQAASTATEKPAAAKKTKKPAKAAAPRKKPAGPSVS. Ser2 carries the N-acetylserine modification. Phosphoserine is present on residues Ser2 and Ser12. Low complexity predominate over residues 8–18; it reads AQAASTATEKP. Residue Lys17 is modified to N6-acetyllysine. Positions 20–37 are enriched in basic residues; the sequence is AAKKTKKPAKAAAPRKKP. Lys36 carries the post-translational modification N6-(beta-hydroxybutyryl)lysine. The H15 domain occupies 38 to 111; that stretch reads AGPSVSELIV…GAAGSFKLNK (74 aa). Residue Ser43 is modified to Phosphoserine. At Lys54 the chain carries N6-(beta-hydroxybutyryl)lysine. Arg56 carries the post-translational modification Citrulline. Lys66 carries the N6-(beta-hydroxybutyryl)lysine modification. Ser67 carries the phosphoserine modification. Lys77 carries the N6-acetyllysine modification. Lys87 bears the N6-(beta-hydroxybutyryl)lysine mark. Lys92 is subject to N6-(beta-hydroxybutyryl)lysine; alternate. Position 92 is an N6-acetyllysine; alternate (Lys92). Position 106 is a phosphoserine (Ser106). An N6-(beta-hydroxybutyryl)lysine modification is found at Lys108. A disordered region spans residues 112-213; that stretch reads KAESKAITTK…KPKKAAPKKK (102 aa). Positions 120-144 are enriched in low complexity; the sequence is TKVSVKAKASGAAKKPKKTAGAAAK. Lys121 is modified (N6-acetyllysine). 2 stretches are compositionally biased toward basic residues: residues 145-178 and 185-213; these read KTVK…KKVA and KAVK…PKKK. The residue at position 201 (Thr201) is a Phosphothreonine.

Belongs to the histone H1/H5 family. As to quaternary structure, interacts with DFFB. H1 histones are progressively phosphorylated during the cell cycle, becoming maximally phosphorylated during late G2 phase and M phase, and being dephosphorylated sharply thereafter. Post-translationally, citrullination at Arg-56 (H1R54ci) by PADI4 takes place within the DNA-binding site of H1 and results in its displacement from chromatin and global chromatin decondensation, thereby promoting pluripotency and stem cell maintenance. In terms of processing, hydroxybutyrylation of histones is induced by starvation. As to expression, restricted to thymus, testis and spleen. Present also in lymphocytic and neuronal cells. Increases in testis starting with a low level at day 5 and reaching high concentrations in 20-day old and adult animals.

The protein localises to the nucleus. The protein resides in the chromosome. Histone H1 protein binds to linker DNA between nucleosomes forming the macromolecular structure known as the chromatin fiber. Histones H1 are necessary for the condensation of nucleosome chains into higher-order structured fibers. Also acts as a regulator of individual gene transcription through chromatin remodeling, nucleosome spacing and DNA methylation. The protein is Histone H1.1 of Mus musculus (Mouse).